Reading from the N-terminus, the 171-residue chain is 3-hydroxydecanoyl-[acyl-carrier-protein] dehydratase (171 aa).

H70 is a catalytic residue.

It belongs to the thioester dehydratase family. FabA subfamily. In terms of assembly, homodimer.

The protein resides in the cytoplasm. It carries out the reaction a (3R)-hydroxyacyl-[ACP] = a (2E)-enoyl-[ACP] + H2O. It catalyses the reaction (3R)-hydroxydecanoyl-[ACP] = (2E)-decenoyl-[ACP] + H2O. The enzyme catalyses (2E)-decenoyl-[ACP] = (3Z)-decenoyl-[ACP]. The protein operates within lipid metabolism; fatty acid biosynthesis. Its function is as follows. Necessary for the introduction of cis unsaturation into fatty acids. Catalyzes the dehydration of (3R)-3-hydroxydecanoyl-ACP to E-(2)-decenoyl-ACP and then its isomerization to Z-(3)-decenoyl-ACP. Can catalyze the dehydratase reaction for beta-hydroxyacyl-ACPs with saturated chain lengths up to 16:0, being most active on intermediate chain length. The sequence is that of 3-hydroxydecanoyl-[acyl-carrier-protein] dehydratase from Shewanella pealeana (strain ATCC 700345 / ANG-SQ1).